A 203-amino-acid polypeptide reads, in one-letter code: Large ribosomal subunit protein eL15 (203 aa).

Positions 160 to 186 (ESRGLTSTGKRSRGLNKGHRYNKTRAG) are disordered. The span at 169 to 186 (KRSRGLNKGHRYNKTRAG) shows a compositional bias: basic residues.

Belongs to the eukaryotic ribosomal protein eL15 family. As to quaternary structure, component of the large ribosomal subunit (LSU). Mature N.crassa ribosomes consist of a small (40S) and a large (60S) subunit. The 40S small subunit contains 1 molecule of ribosomal RNA (18S rRNA) and at least 32 different proteins. The large 60S subunit contains 3 rRNA molecules (26S, 5.8S and 5S rRNA) and at least 42 different proteins.

Its subcellular location is the cytoplasm. Functionally, component of the ribosome, a large ribonucleoprotein complex responsible for the synthesis of proteins in the cell. The small ribosomal subunit (SSU) binds messenger RNAs (mRNAs) and translates the encoded message by selecting cognate aminoacyl-transfer RNA (tRNA) molecules. The large subunit (LSU) contains the ribosomal catalytic site termed the peptidyl transferase center (PTC), which catalyzes the formation of peptide bonds, thereby polymerizing the amino acids delivered by tRNAs into a polypeptide chain. The nascent polypeptides leave the ribosome through a tunnel in the LSU and interact with protein factors that function in enzymatic processing, targeting, and the membrane insertion of nascent chains at the exit of the ribosomal tunnel. The sequence is that of Large ribosomal subunit protein eL15 (rpl-15) from Neurospora crassa (strain ATCC 24698 / 74-OR23-1A / CBS 708.71 / DSM 1257 / FGSC 987).